Here is a 137-residue protein sequence, read N- to C-terminus: Probable Hsp20 family chaperone (137 aa).

The sHSP domain occupies 25–137; sequence LTNNNNIMKT…PKEKHYIKLN (113 aa).

This sequence belongs to the small heat shock protein (HSP20) family.

Its function is as follows. Probable chaperone. The polypeptide is Probable Hsp20 family chaperone (Onion yellows phytoplasma (strain OY-M)).